Here is a 345-residue protein sequence, read N- to C-terminus: Trace amine-associated receptor 6 (345 aa).

Topologically, residues 1–32 (MGSNSSPPTVLQLCYENVTGSCVKTPYSPGSR) are extracellular. N17 is a glycosylation site (N-linked (GlcNAc...) asparagine). 2 disulfide bridges follow: C22–C186 and C105–C190. Residues 33–53 (VILYAVFGFGAVLAVFGNLMV) traverse the membrane as a helical segment. At 54 to 68 (MISILHFKQLHSPTN) the chain is on the cytoplasmic side. A helical transmembrane segment spans residues 69–89 (FLIASLACADFGVGISVMPFS). Over 90–107 (MVRSIESCWYFGRSFCTF) the chain is Extracellular. Residues 108-128 (HTCCDVAFCYSSLFHLSFISI) form a helical membrane-spanning segment. Over 129 to 147 (DRYIAVTDPLVYPTKFTVS) the chain is Cytoplasmic. A helical transmembrane segment spans residues 148 to 168 (VSGICIGVSWILPLVYSGAVF). The Extracellular segment spans residues 169-202 (YTGVYDDGLEELSSALNCVGGCQVVVNQNWVLID). An extracellular Loop 2 (ECL2) region spans residues 174–187 (DDGLEELSSALNCV). Residues 203 to 223 (FLSFLIPTLVMIILYGNIFLV) traverse the membrane as a helical segment. Residues 224–259 (ARQQAKKIENIGSKTESSSESYKARVARRERKAAKT) lie on the Cytoplasmic side of the membrane. A helical membrane pass occupies residues 260 to 276 (LGITVVAFMISWLPYSI). Residues 277–282 (DSLVDA) are Extracellular-facing. A helical transmembrane segment spans residues 283–302 (FMGFITPAYIYEICVWCAYY). Residues 303 to 345 (NSAMNPLIYALFYPWFKKAIKVIMSGQVFKNSSATMNLFSEQI) are Cytoplasmic-facing.

It belongs to the G-protein coupled receptor 1 family. In terms of tissue distribution, specifically expressed in neurons of the olfactory epithelium, to discrete glomeruli predominantly localized to a confined bulb region. Present in a ventral area of the main olfactory epithelium.

It localises to the cell membrane. In terms of biological role, olfactory receptor specific for trace amines, such as beta-phenylethylamine (beta-PEA). Trace amine compounds are enriched in animal body fluids and act on trace amine-associated receptors (TAARs) to elicit both intraspecific and interspecific innate behaviors. Beta-PEA-binding causes a conformation change that triggers signaling via G(s)-class of G alpha proteins (GNAL or GNAS). The protein is Trace amine-associated receptor 6 of Mus musculus (Mouse).